An 872-amino-acid chain; its full sequence is Alanine--tRNA ligase (872 aa).

His-563, His-567, Cys-665, and His-669 together coordinate Zn(2+).

Belongs to the class-II aminoacyl-tRNA synthetase family. The cofactor is Zn(2+).

Its subcellular location is the cytoplasm. The enzyme catalyses tRNA(Ala) + L-alanine + ATP = L-alanyl-tRNA(Ala) + AMP + diphosphate. Catalyzes the attachment of alanine to tRNA(Ala) in a two-step reaction: alanine is first activated by ATP to form Ala-AMP and then transferred to the acceptor end of tRNA(Ala). Also edits incorrectly charged Ser-tRNA(Ala) and Gly-tRNA(Ala) via its editing domain. This chain is Alanine--tRNA ligase, found in Bacteroides fragilis (strain ATCC 25285 / DSM 2151 / CCUG 4856 / JCM 11019 / LMG 10263 / NCTC 9343 / Onslow / VPI 2553 / EN-2).